Reading from the N-terminus, the 246-residue chain is Orotidine 5'-phosphate decarboxylase (246 aa).

Substrate-binding positions include aspartate 18, lysine 39, aspartate 66 to threonine 75, threonine 130, arginine 192, glutamine 201, glycine 221, and arginine 222. Catalysis depends on lysine 68, which acts as the Proton donor.

The protein belongs to the OMP decarboxylase family. Type 1 subfamily. As to quaternary structure, homodimer.

It carries out the reaction orotidine 5'-phosphate + H(+) = UMP + CO2. The protein operates within pyrimidine metabolism; UMP biosynthesis via de novo pathway; UMP from orotate: step 2/2. Functionally, catalyzes the decarboxylation of orotidine 5'-monophosphate (OMP) to uridine 5'-monophosphate (UMP). This is Orotidine 5'-phosphate decarboxylase from Parasynechococcus marenigrum (strain WH8102).